A 189-amino-acid polypeptide reads, in one-letter code: Notch ligand osm-11 (189 aa).

A signal peptide spans 1-18; that stretch reads MNFITVAALAIVMVLAQA.

May interact with lin-12/Notch receptor. In terms of tissue distribution, expressed in coelomocytes (at protein level).

The protein resides in the apical cell membrane. Its function is as follows. Probable secreted lin-12/Notch ligand or co-ligand involved in the mediation of Notch signaling. Involved in the lin-12/Notch pathway signaling of cell fate in vulval precursor cells (VPCs), acting redundantly with dsl-1 and lag-2. Required for normal octanol avoidance response, acting via both lin-12/Notch and glp-1/Notch signaling pathways in neurons, in concert with lag-2. Involved in regulation of sleep-like quiescence during the larval to adult transition, acting via Notch receptor activation and in parallel with EGF signaling. This is Notch ligand osm-11 from Caenorhabditis elegans.